A 305-amino-acid polypeptide reads, in one-letter code: Zinc transporter ZIP9 (305 aa).

A helical transmembrane segment spans residues 7-27 (ICLLSLAMLVACYVAGIIPLA). N-linked (GlcNAc...) asparagine glycosylation occurs at Asn29. A run of 5 helical transmembrane segments spans residues 35–55 (LKLV…AVIV), 104–124 (AYIG…DQIG), 144–164 (ITTT…LGAA), 174–194 (LIVF…LVSF), and 208–228 (HLLV…LGLS). An N-linked (GlcNAc...) asparagine glycan is attached at Asn239. 2 helical membrane-spanning segments follow: residues 242–262 (GVAM…HVLP) and 284–304 (LEVA…IGHH).

The protein belongs to the ZIP transporter (TC 2.A.5) family.

The protein localises to the golgi apparatus. Its subcellular location is the trans-Golgi network membrane. It localises to the cell membrane. It is found in the cytoplasm. The protein resides in the perinuclear region. The protein localises to the mitochondrion. Its subcellular location is the nucleus. It carries out the reaction Zn(2+)(in) = Zn(2+)(out). Functionally, transports zinc ions across cell and organelle membranes into the cytoplasm and regulates intracellular zinc homeostasis. Participates in the zinc ions efflux out of the secretory compartments. Regulates intracellular zinc level, resulting in the enhancement of AKT1 and MAPK3/MAPK1 (Erk1/2) phosphorylation in response to the BCR activation. Also functions as a membrane androgen receptor that mediates, through a G protein, the non-classical androgen signaling pathway, characterized by the activation of MAPK3/MAPK1 (Erk1/2) and transcription factors CREB1 or ATF1. Moreover, has dual functions as a membrane-bound androgen receptor and as an androgen-dependent zinc transporter both of which are mediated through an inhibitory G protein (Gi) that mediates both MAP kinase and zinc signaling leading to the androgen-dependent apoptotic process. In Gallus gallus (Chicken), this protein is Zinc transporter ZIP9.